We begin with the raw amino-acid sequence, 477 residues long: MPKAAASLASLLPQLWHRPVQPPPFLHRALSSSSPLLRRHRAALHSPAAPLSAAAVSTSAATVEAPATAAYPVYGRLLPCPLQDDPPRIEHLVAREDEVAVDFISRSLTLPPLYVADLIKFGAVYYALVAPQPPPHAAPEHVRIFREVTEPSVLCRRKSIKGKTVREAQKTFRVTDPNQRLEAGTYLRVHVHPKRFPRCYEIDWKSRVIAVTDNYVVLDKPAATSVGGATDNIEESCVVFTSRALGLETPLMTTHQIDNCSEGCVVLSKTKEFCSVFHGMIREKQVNKRYLALTTAPVSTGIITHYMRPINRAPRLVSEDHIKGWHVCQMEILDCKKVPWPSSLIRKVHKVDNCGWPQQEAAYECKINLLTGKTHQIRAQLAAIGTPIVGDSAYMTAAMAAIVNPSINPFGRWGQNYDSEDEKAAAVEAWISCHGKEPKSVIGLQASEISWDYEGEHHSYKAGVPWWRQDAVESDLI.

A chloroplast-targeting transit peptide spans 1–52; the sequence is MPKAAASLASLLPQLWHRPVQPPPFLHRALSSSSPLLRRHRAALHSPAAPLS. Residues 98 to 205 form the S4 RNA-binding domain; sequence EVAVDFISRS…FPRCYEIDWK (108 aa). The active site involves Asp258.

It belongs to the pseudouridine synthase RluA family.

Its subcellular location is the plastid. The protein localises to the chloroplast. It catalyses the reaction a uridine in RNA = a pseudouridine in RNA. The sequence is that of RNA pseudouridine synthase 6, chloroplastic from Oryza sativa subsp. japonica (Rice).